Here is a 1058-residue protein sequence, read N- to C-terminus: SMC5-SMC6 complex localization factor protein 1 (1058 aa).

BRCT domains follow at residues 12 to 77 (MTGF…IHSA) and 119 to 196 (GAPG…GDFL). Residues 410–1058 (PRGVLNLIES…MMCRSVMEFS (649 aa)) form an NSE5-like domain; mediates interaction with SLF2 region. ANK repeat units follow at residues 806–836 (KGET…DINV), 840–869 (AGWT…EVDL), and 874–903 (DGVT…PVLL). K931 is covalently cross-linked (Glycyl lysine isopeptide (Lys-Gly) (interchain with G-Cter in SUMO2)).

Interacts (via N-terminus) with SLF2; this interaction links RAD18 to the SMC5-SMC6 complex. Interacts (via BRCT domains) with RAD18; this interaction occurs in a SLF2-independent manner. Interacts with SMC6. Interacts (via BRCT domains) with RAD18 (via C-terminus and phosphorylated form); this interaction is required for efficient repair of UV-induced DNA damage.

The protein localises to the nucleus. The protein resides in the cytoplasm. It is found in the cytoskeleton. It localises to the microtubule organizing center. Its subcellular location is the centrosome. Its function is as follows. Plays a role in the DNA damage response (DDR) pathway by regulating postreplication repair of UV-damaged DNA and genomic stability maintenance. The SLF1-SLF2 complex acts to link RAD18 with the SMC5-SMC6 complex at replication-coupled interstrand cross-links (ICL) and DNA double-strand breaks (DSBs) sites on chromatin during DNA repair in response to stalled replication forks. Promotes the recruitment of SLF2 and the SMC5-SMC6 complex to DNA lesions. The polypeptide is SMC5-SMC6 complex localization factor protein 1 (Homo sapiens (Human)).